The sequence spans 431 residues: Large envelope protein (431 aa).

The N-myristoyl glycine; by host moiety is linked to residue Gly2. A pre-S1 region spans residues 2–148 (GNNIKVTFNP…PPLRDTHPHL (147 aa)). A pre-S region spans residues 2 to 207 (GNNIKVTFNP…PSTTGDPALS (206 aa)). Residues 2 to 214 (GNNIKVTFNP…ALSPEMSPSS (213 aa)) lie on the Virion surface; in external conformation side of the membrane. The Intravirion; in internal conformation portion of the chain corresponds to 2-286 (GNNIKVTFNP…NGFRWMYLRR (285 aa)). An N-linked (GlcNAc...) asparagine glycan is attached at Asn3. The interval 115–146 (IPRGLVPPQTPTNRDQGRKPTPPTPPLRDTHP) is disordered. Residues 149–207 (TMKNQTFRLQGFVDGLRDLTTTERYHNAYGDPFTTLSPVVPTVSTILSPPSTTGDPALS) form a pre-S2 region. The helical transmembrane segment at 215-235 (LLGLLAGLQVVYFLWTKILTI) threads the bilayer. The Intravirion; in external conformation segment spans residues 236 to 286 (AQNLDWWWTSLSFPGGIPECTGQNSQFQTCKHLPTSCPPTCNGFRWMYLRR). The helical transmembrane segment at 287-307 (FIIYLLVLLLCLIFLLVLLDW) threads the bilayer. The Virion surface segment spans residues 308 to 379 (KGLIPVCPLQ…WALARFSWLN (72 aa)). N-linked (GlcNAc...) asparagine; by host glycosylation occurs at Asn351. The chain crosses the membrane as a helical span at residues 380-400 (LLVPLLQWLGGISLIAWFLLI). Topologically, residues 401 to 406 (WMIWFW) are intravirion. Residues 407-429 (GPALLSILPPFIPIFVLFFLIWV) traverse the membrane as a helical segment. Topologically, residues 430–431 (YI) are virion surface.

The protein belongs to the orthohepadnavirus major surface antigen family. In terms of assembly, in its internal form (Li-HBsAg), interacts with the capsid protein and with the isoform S. Interacts with host chaperone CANX. As to quaternary structure, associates with host chaperone CANX through its pre-S2 N glycan; this association may be essential for isoform M proper secretion. Interacts with isoform L. Interacts with the antigens of satellite virus HDV (HDVAgs); this interaction is required for encapsidation of HDV genomic RNA. Post-translationally, isoform M is N-terminally acetylated by host at a ratio of 90%, and N-glycosylated by host at the pre-S2 region. Myristoylated.

The protein localises to the virion membrane. The large envelope protein exists in two topological conformations, one which is termed 'external' or Le-HBsAg and the other 'internal' or Li-HBsAg. In its external conformation the protein attaches the virus to cell receptors and thereby initiating infection. This interaction determines the species specificity and liver tropism. This attachment induces virion internalization predominantly through caveolin-mediated endocytosis. The large envelope protein also assures fusion between virion membrane and endosomal membrane. In its internal conformation the protein plays a role in virion morphogenesis and mediates the contact with the nucleocapsid like a matrix protein. In terms of biological role, the middle envelope protein plays an important role in the budding of the virion. It is involved in the induction of budding in a nucleocapsid independent way. In this process the majority of envelope proteins bud to form subviral lipoprotein particles of 22 nm of diameter that do not contain a nucleocapsid. This is Large envelope protein from Woodchuck hepatitis B virus (isolate 59) (WHV).